Here is a 326-residue protein sequence, read N- to C-terminus: Phosphate acyltransferase (326 aa).

It belongs to the PlsX family. In terms of assembly, homodimer. Probably interacts with PlsY.

It localises to the cytoplasm. The catalysed reaction is a fatty acyl-[ACP] + phosphate = an acyl phosphate + holo-[ACP]. It participates in lipid metabolism; phospholipid metabolism. Catalyzes the reversible formation of acyl-phosphate (acyl-PO(4)) from acyl-[acyl-carrier-protein] (acyl-ACP). This enzyme utilizes acyl-ACP as fatty acyl donor, but not acyl-CoA. In Macrococcus caseolyticus (strain JCSC5402) (Macrococcoides caseolyticum), this protein is Phosphate acyltransferase.